The sequence spans 218 residues: 3,4-dihydroxy-2-butanone 4-phosphate synthase (218 aa).

D-ribulose 5-phosphate-binding positions include 38-39 (RE), Asp43, 151-155 (RRGHT), and Glu175. Residue Glu39 participates in Mg(2+) binding. Mg(2+) is bound at residue His154.

The protein belongs to the DHBP synthase family. As to quaternary structure, homodimer. Requires Mg(2+) as cofactor. Mn(2+) is required as a cofactor.

The catalysed reaction is D-ribulose 5-phosphate = (2S)-2-hydroxy-3-oxobutyl phosphate + formate + H(+). The protein operates within cofactor biosynthesis; riboflavin biosynthesis; 2-hydroxy-3-oxobutyl phosphate from D-ribulose 5-phosphate: step 1/1. Functionally, catalyzes the conversion of D-ribulose 5-phosphate to formate and 3,4-dihydroxy-2-butanone 4-phosphate. This is 3,4-dihydroxy-2-butanone 4-phosphate synthase from Vibrio cholerae serotype O1 (strain M66-2).